We begin with the raw amino-acid sequence, 128 residues long: Fluoride-specific ion channel FluC (128 aa).

4 helical membrane-spanning segments follow: residues 5 to 25 (IVAIFVGAGFGAVLRWFLALA), 35 to 55 (LGTLAANLIGGYVIGVAAVVF), 67 to 87 (LFVITGFLGGLTTFSTYSVEV), and 96 to 116 (FGWAIAVAALHLTGSFTLTAL). Positions 75 and 78 each coordinate Na(+).

It belongs to the fluoride channel Fluc/FEX (TC 1.A.43) family.

It is found in the cell inner membrane. It catalyses the reaction fluoride(in) = fluoride(out). Na(+) is not transported, but it plays an essential structural role and its presence is essential for fluoride channel function. Functionally, fluoride-specific ion channel. Important for reducing fluoride concentration in the cell, thus reducing its toxicity. This is Fluoride-specific ion channel FluC from Burkholderia ambifaria (strain MC40-6).